The chain runs to 120 residues: NAD(P)H-quinone oxidoreductase subunit 3, chloroplastic (120 aa).

The next 3 helical transmembrane spans lie at 7 to 27 (YQTF…ALLI), 64 to 84 (SFAL…PWAM), and 89 to 109 (LGIF…IGLV).

This sequence belongs to the complex I subunit 3 family. In terms of assembly, NDH is composed of at least 16 different subunits, 5 of which are encoded in the nucleus.

The protein resides in the plastid. The protein localises to the chloroplast thylakoid membrane. It carries out the reaction a plastoquinone + NADH + (n+1) H(+)(in) = a plastoquinol + NAD(+) + n H(+)(out). The enzyme catalyses a plastoquinone + NADPH + (n+1) H(+)(in) = a plastoquinol + NADP(+) + n H(+)(out). Its function is as follows. NDH shuttles electrons from NAD(P)H:plastoquinone, via FMN and iron-sulfur (Fe-S) centers, to quinones in the photosynthetic chain and possibly in a chloroplast respiratory chain. The immediate electron acceptor for the enzyme in this species is believed to be plastoquinone. Couples the redox reaction to proton translocation, and thus conserves the redox energy in a proton gradient. The sequence is that of NAD(P)H-quinone oxidoreductase subunit 3, chloroplastic from Psilotum nudum (Whisk fern).